The following is a 253-amino-acid chain: Ubiquinone/menaquinone biosynthesis C-methyltransferase UbiE (253 aa).

Residues T76, D97, 125–126 (NA), and S142 contribute to the S-adenosyl-L-methionine site.

This sequence belongs to the class I-like SAM-binding methyltransferase superfamily. MenG/UbiE family.

The enzyme catalyses a 2-demethylmenaquinol + S-adenosyl-L-methionine = a menaquinol + S-adenosyl-L-homocysteine + H(+). The catalysed reaction is a 2-methoxy-6-(all-trans-polyprenyl)benzene-1,4-diol + S-adenosyl-L-methionine = a 5-methoxy-2-methyl-3-(all-trans-polyprenyl)benzene-1,4-diol + S-adenosyl-L-homocysteine + H(+). It participates in quinol/quinone metabolism; menaquinone biosynthesis; menaquinol from 1,4-dihydroxy-2-naphthoate: step 2/2. Its pathway is cofactor biosynthesis; ubiquinone biosynthesis. In terms of biological role, methyltransferase required for the conversion of demethylmenaquinol (DMKH2) to menaquinol (MKH2) and the conversion of 2-polyprenyl-6-methoxy-1,4-benzoquinol (DDMQH2) to 2-polyprenyl-3-methyl-6-methoxy-1,4-benzoquinol (DMQH2). The polypeptide is Ubiquinone/menaquinone biosynthesis C-methyltransferase UbiE (Xanthomonas campestris pv. campestris (strain ATCC 33913 / DSM 3586 / NCPPB 528 / LMG 568 / P 25)).